A 188-amino-acid polypeptide reads, in one-letter code: Succinate-acetate/proton symporter SatP (188 aa).

Topologically, residues 1-13 (MGNTKLANPAPLG) are cytoplasmic. The helical transmembrane segment at 14-34 (LMGFGMTTILLNLHNVGYFAL) threads the bilayer. Residue Asp-35 is a topological domain, periplasmic. Residues 36–56 (GIILAMGIFYGGIAQIFAGLL) traverse the membrane as a helical segment. Topologically, residues 57-63 (EYKKGNT) are cytoplasmic. Residues 64–84 (FGLTAFTSYGSFWLTLVAILL) form a helical membrane-spanning segment. The Periplasmic segment spans residues 85–97 (MPKLGLTDAPNAQ). The chain crosses the membrane as a helical span at residues 98–118 (FLGVYLGLWGVFTLFMFFGTL). The Cytoplasmic segment spans residues 119–122 (KGAR). The chain crosses the membrane as a helical span at residues 123 to 143 (VLQFVFFSLTVLFALLAIGNI). At 144–148 (AGNAA) the chain is on the periplasmic side. A helical membrane pass occupies residues 149–169 (IIHFAGWIGLICGASAIYLAM). Residues 170–188 (GEVLNEQFGRTVLPIGESH) are Cytoplasmic-facing.

Belongs to the acetate uptake transporter (AceTr) (TC 2.A.96) family.

It localises to the cell inner membrane. In terms of biological role, uptake of acetate and succinate. Transport is energetically dependent on the protonmotive force. This is Succinate-acetate/proton symporter SatP (satP) from Escherichia coli O157:H7.